We begin with the raw amino-acid sequence, 621 residues long: UvrABC system protein C (621 aa).

In terms of domain architecture, GIY-YIG spans 13–92 (EKPGVYMMRN…IKENRPKYNV (80 aa)). The region spanning 205–240 (DELVRKIEEKMKAAAISMDFENAARYRDQIIALNNI) is the UVR domain.

Belongs to the UvrC family. Interacts with UvrB in an incision complex.

Its subcellular location is the cytoplasm. Functionally, the UvrABC repair system catalyzes the recognition and processing of DNA lesions. UvrC both incises the 5' and 3' sides of the lesion. The N-terminal half is responsible for the 3' incision and the C-terminal half is responsible for the 5' incision. The sequence is that of UvrABC system protein C from Alkaliphilus oremlandii (strain OhILAs) (Clostridium oremlandii (strain OhILAs)).